Consider the following 447-residue polypeptide: Acid phosphatase (447 aa).

An N-terminal signal peptide occupies residues 1-17 (MKPSVATLLATVSLVYA). Residues asparagine 119, asparagine 150, asparagine 177, asparagine 186, and asparagine 208 are each glycosylated (N-linked (GlcNAc...) asparagine). Aspartate 215 functions as the Proton donor in the catalytic mechanism. N-linked (GlcNAc...) asparagine glycans are attached at residues asparagine 217, asparagine 234, asparagine 240, asparagine 315, asparagine 332, asparagine 382, and asparagine 405. The GPI-like-anchor amidated serine moiety is linked to residue serine 419. A propeptide spans 420–447 (ASSNAAVSAVAPAAGVSGLLLGLALNLL) (removed in mature form).

The GPI-like anchor contains a phosphoceramide lipid group. The anchor position has not been determined.

It is found in the cell membrane. The enzyme catalyses a phosphate monoester + H2O = an alcohol + phosphate. With respect to regulation, inhibited by NaF, molybdate and vanadate. Its function is as follows. Has both phosphomonoesterase and phosphodiesterase activity. Cleaves a broad range of phosphate esters. The protein is Acid phosphatase (phoA) of Aspergillus fumigatus (strain ATCC MYA-4609 / CBS 101355 / FGSC A1100 / Af293) (Neosartorya fumigata).